The sequence spans 918 residues: Chaperone protein ClpC4, chloroplastic (918 aa).

An i region spans residues 266 to 515; the sequence is LMEYGTNLTK…RLRNAQCKPS (250 aa). Residues 311–318 and 653–660 each bind ATP; these read GEPGVGKT and GPTGVGKS. Residues 579–774 form an II region; sequence VTEDDVRHAI…LIVMTTNIGS (196 aa).

Belongs to the ClpA/ClpB family. ClpC subfamily.

The protein localises to the plastid. The protein resides in the chloroplast. Molecular chaperone that may interact with a ClpP-like protease involved in degradation of denatured proteins in the chloroplast. The protein is Chaperone protein ClpC4, chloroplastic (CPLC4) of Oryza sativa subsp. japonica (Rice).